The primary structure comprises 909 residues: Protein translocase subunit SecA (909 aa).

Residues Gln-87 and 105-109 contribute to the ATP site; that span reads GEGKT. Residues 246–265 form a disordered region; the sequence is LEQQEKEDEEGKNGDGDYTI. Basic and acidic residues predominate over residues 254–265; sequence EEGKNGDGDYTI. Residue Asp-512 participates in ATP binding. Residues 834–858 show a composition bias toward basic and acidic residues; sequence ESDVEAVEEQRRQADEQPKQYEHET. The disordered stretch occupies residues 834-899; sequence ESDVEAVEEQ…NDPCPCGSGL (66 aa). A compositionally biased stretch (low complexity) spans 859–875; that stretch reads ASATQAPEQAPEAAPAA. Zn(2+)-binding residues include Cys-893, Cys-895, Cys-904, and His-905.

The protein belongs to the SecA family. As to quaternary structure, monomer and homodimer. Part of the essential Sec protein translocation apparatus which comprises SecA, SecYEG and auxiliary proteins SecDF-YajC and YidC. The cofactor is Zn(2+).

Its subcellular location is the cell inner membrane. It is found in the cytoplasm. The catalysed reaction is ATP + H2O + cellular proteinSide 1 = ADP + phosphate + cellular proteinSide 2.. In terms of biological role, part of the Sec protein translocase complex. Interacts with the SecYEG preprotein conducting channel. Has a central role in coupling the hydrolysis of ATP to the transfer of proteins into and across the cell membrane, serving both as a receptor for the preprotein-SecB complex and as an ATP-driven molecular motor driving the stepwise translocation of polypeptide chains across the membrane. The sequence is that of Protein translocase subunit SecA from Pseudoalteromonas atlantica (strain T6c / ATCC BAA-1087).